A 462-amino-acid chain; its full sequence is Argininosuccinate lyase (462 aa).

It belongs to the lyase 1 family. Argininosuccinate lyase subfamily.

Its subcellular location is the cytoplasm. It catalyses the reaction 2-(N(omega)-L-arginino)succinate = fumarate + L-arginine. It participates in amino-acid biosynthesis; L-arginine biosynthesis; L-arginine from L-ornithine and carbamoyl phosphate: step 3/3. The chain is Argininosuccinate lyase from Gloeothece citriformis (strain PCC 7424) (Cyanothece sp. (strain PCC 7424)).